The primary structure comprises 259 residues: Glutamate racemase (259 aa).

Residues 12–13 (DS) and 44–45 (YG) each bind substrate. The active-site Proton donor/acceptor is cysteine 75. 76 to 77 (NT) contributes to the substrate binding site. Catalysis depends on cysteine 186, which acts as the Proton donor/acceptor. 187–188 (TH) is a substrate binding site.

The protein belongs to the aspartate/glutamate racemases family.

It catalyses the reaction L-glutamate = D-glutamate. The protein operates within cell wall biogenesis; peptidoglycan biosynthesis. Its function is as follows. Provides the (R)-glutamate required for cell wall biosynthesis. This is Glutamate racemase from Clostridium novyi (strain NT).